The sequence spans 560 residues: Serine/threonine-protein kinase TOS3 (560 aa).

In terms of domain architecture, Protein kinase spans 50 to 344 (FEILATLGNG…LADIKVHPFM (295 aa)). ATP contacts are provided by residues 56–64 (LGNGQYGKV) and Lys-79. The Proton acceptor role is filled by Asp-189.

It belongs to the protein kinase superfamily. Ser/Thr protein kinase family. Post-translationally, autophosphorylated.

The catalysed reaction is L-seryl-[protein] + ATP = O-phospho-L-seryl-[protein] + ADP + H(+). It catalyses the reaction L-threonyl-[protein] + ATP = O-phospho-L-threonyl-[protein] + ADP + H(+). In terms of biological role, one of the three SNF1 protein kinases (with SAK1 and ELM1) which are required for growth on nonfermentable carbon sources and nonpreferred sugars and for response to environmental stress. Activates SNF1 by phosphorylation of its activation-loop 'Thr-210'. Required for the regulation by SNF1 of the transcription of a large set of genes, the modification the activity of metabolic enzymes, and the control of various nutrient-responsive cellular developmental processes. Also phosphorylates GAL83, MIG1 and SIP2. The protein is Serine/threonine-protein kinase TOS3 (TOS3) of Saccharomyces cerevisiae (strain ATCC 204508 / S288c) (Baker's yeast).